We begin with the raw amino-acid sequence, 98 residues long: NADH-ubiquinone oxidoreductase chain 4L (98 aa).

A run of 3 helical transmembrane segments spans residues Met-1–Val-21, Thr-29–Thr-49, and Leu-59–Val-79.

The protein belongs to the complex I subunit 4L family. As to quaternary structure, core subunit of respiratory chain NADH dehydrogenase (Complex I) which is composed of 45 different subunits.

It localises to the mitochondrion inner membrane. It carries out the reaction a ubiquinone + NADH + 5 H(+)(in) = a ubiquinol + NAD(+) + 4 H(+)(out). In terms of biological role, core subunit of the mitochondrial membrane respiratory chain NADH dehydrogenase (Complex I) which catalyzes electron transfer from NADH through the respiratory chain, using ubiquinone as an electron acceptor. Part of the enzyme membrane arm which is embedded in the lipid bilayer and involved in proton translocation. The sequence is that of NADH-ubiquinone oxidoreductase chain 4L (MT-ND4L) from Notoryctes typhlops (Southern marsupial mole).